We begin with the raw amino-acid sequence, 437 residues long: Histidinol dehydrogenase (437 aa).

Positions 137, 199, and 222 each coordinate NAD(+). Ser245, Gln267, and His270 together coordinate substrate. Residues Gln267 and His270 each contribute to the Zn(2+) site. Catalysis depends on proton acceptor residues Glu335 and His336. Substrate contacts are provided by His336, Asp369, Glu423, and His428. Position 369 (Asp369) interacts with Zn(2+). Zn(2+) is bound at residue His428.

This sequence belongs to the histidinol dehydrogenase family. Zn(2+) is required as a cofactor.

It catalyses the reaction L-histidinol + 2 NAD(+) + H2O = L-histidine + 2 NADH + 3 H(+). It participates in amino-acid biosynthesis; L-histidine biosynthesis; L-histidine from 5-phospho-alpha-D-ribose 1-diphosphate: step 9/9. Functionally, catalyzes the sequential NAD-dependent oxidations of L-histidinol to L-histidinaldehyde and then to L-histidine. In Parasynechococcus marenigrum (strain WH8102), this protein is Histidinol dehydrogenase.